We begin with the raw amino-acid sequence, 420 residues long: Sulfate adenylyltransferase (420 aa).

The protein belongs to the sulfate adenylyltransferase family.

It carries out the reaction sulfate + ATP + H(+) = adenosine 5'-phosphosulfate + diphosphate. The protein operates within sulfur metabolism; hydrogen sulfide biosynthesis; sulfite from sulfate: step 1/3. This chain is Sulfate adenylyltransferase, found in Desulforudis audaxviator (strain MP104C).